A 130-amino-acid polypeptide reads, in one-letter code: MSATQNYGTGRRKTATARVFLRPGTGNISINNRSLDNFFGRETARMVVRQPLELTETVEKFDIYVTVIGGGVSGQAGAIRHGITRALMDYDETLRSALRKAGFVTRDAREVERKKVGLRKARKRPQYSKR.

It belongs to the universal ribosomal protein uS9 family.

In Pseudomonas fluorescens (strain ATCC BAA-477 / NRRL B-23932 / Pf-5), this protein is Small ribosomal subunit protein uS9.